We begin with the raw amino-acid sequence, 119 residues long: MAEHNDLGKFGEDLSVEFLQKKGYSILETNWTFQKAEIDIIAQKENILVIVEVKTRSSIDFGSPQDFVKPAKIQLLVKAVNEYVISNDLDLEIRFDIIAVYKERKEFKIEHFEDAFYHF.

Belongs to the UPF0102 family.

This Flavobacterium psychrophilum (strain ATCC 49511 / DSM 21280 / CIP 103535 / JIP02/86) protein is UPF0102 protein FP2501.